Consider the following 169-residue polypeptide: MRVFKDAISGDEMFSDSHSPQLINDVVYEVDANFITVSNGLDSKLIAANPSGEEGQEEVSDSTERVIDLVHASRLVSTSFDKKSYRAYLKGYLKAIKERLQKENPERVSIFESRINEYMVNVFKNFDDYEHYIGESMNPDGMVALMNFRENGVTPYFVFLKDGLIEEKY.

A TCTP domain is found at 1–169; that stretch reads MRVFKDAISG…LKDGLIEEKY (169 aa).

It belongs to the TCTP family.

It is found in the cytoplasm. Its function is as follows. Involved in calcium binding and microtubule stabilization. In Schistosoma japonicum (Blood fluke), this protein is Translationally-controlled tumor protein homolog (TCTP).